The primary structure comprises 219 residues: Kynurenine formamidase (219 aa).

Trp-28 lines the substrate pocket. 3 residues coordinate Zn(2+): His-58, His-62, and Asp-64. His-68 acts as the Proton donor/acceptor in catalysis. Zn(2+) is bound by residues His-170 and Glu-182.

The protein belongs to the Cyclase 1 superfamily. KynB family. In terms of assembly, homodimer. Zn(2+) serves as cofactor.

It carries out the reaction N-formyl-L-kynurenine + H2O = L-kynurenine + formate + H(+). Its pathway is amino-acid degradation; L-tryptophan degradation via kynurenine pathway; L-kynurenine from L-tryptophan: step 2/2. In terms of biological role, catalyzes the hydrolysis of N-formyl-L-kynurenine to L-kynurenine, the second step in the kynurenine pathway of tryptophan degradation. This chain is Kynurenine formamidase, found in Cupriavidus pinatubonensis (strain JMP 134 / LMG 1197) (Cupriavidus necator (strain JMP 134)).